The following is a 686-amino-acid chain: MAM domain-containing protein 2 (686 aa).

The signal sequence occupies residues 1-18 (MLLRGVLLALQALQLAGA). MAM domains follow at residues 24–169 (GSCA…YCIE), 168–329 (IECD…HCQN), 340–498 (ASCN…SCSS), and 507–666 (GECT…PCGE). Residues Asn-134 and Asn-329 are each glycosylated (N-linked (GlcNAc...) asparagine). Disordered regions lie at residues 521–543 (EKRNRSSWHRRRGETPTSYTGPK) and 665–686 (GEMEDTTQQSSGYSEDLNEIEY). An N-linked (GlcNAc...) asparagine glycan is attached at Asn-524.

Post-translationally, O-glycosylated.

The protein resides in the secreted. It is found in the extracellular space. The protein localises to the extracellular matrix. The sequence is that of MAM domain-containing protein 2 (MAMDC2) from Homo sapiens (Human).